Reading from the N-terminus, the 245-residue chain is Galectin-3 (245 aa).

The tract at residues 1–30 (MADGFSLNDALAGSGNPNPQGWPGAWGNQP) is disordered. The residue at position 2 (alanine 2) is an N-acetylalanine. Phosphoserine; by CK1 is present on serine 6. Repeat copies occupy residues 35-43 (YPGASYPGA), 44-52 (YPGQAPPGA), 53-61 (YPGQAPPGA), and 62-70 (YPGPTAPGA). The segment at 35–99 (YPGASYPGAY…PSAPGAYPAA (65 aa)) is 7 X 9 AA tandem repeats of Y-P-G-X(3)-P-[GS]-A. Residues 47-68 (QAPPGAYPGQAPPGAYPGPTAP) form a disordered region. Residues 71-78 (YPGPAPGA) form a 5; approximate repeat. One copy of the 6; approximate repeat lies at 79–88 (YPGQPGASGA). The stretch at 89 to 99 (YPSAPGAYPAA) is one 7; approximate repeat. The Galectin domain occupies 113–243 (YKLPLAGGVM…DITLTSAAPT (131 aa)). 176 to 182 (WGREERQ) contributes to the a beta-D-galactoside binding site. Serine 183 bears the Phosphoserine mark. The Nuclear export signal signature appears at 221–236 (KNLREINQMEISGDIT).

In terms of assembly, probably forms homo- or heterodimers. Interacts with DMBT1. Interacts with CD6 and ALCAM. Forms a complex with the ITGA3, ITGB1 and CSPG4. Interacts with LGALS3BP, LYPD3, ZFTRAF1 and UACA. Interacts with TRIM16; this interaction mediates autophagy of damage endomembranes. Interacts with cargo receptor TMED10; the interaction mediates the translocation from the cytoplasm into the ERGIC (endoplasmic reticulum-Golgi intermediate compartment) and thereby secretion. Interacts with and inhibits by binding NCR3/NKp30.

The protein resides in the cytoplasm. The protein localises to the nucleus. It is found in the secreted. Galactose-specific lectin which binds IgE. May mediate with the alpha-3, beta-1 integrin the stimulation by CSPG4 of endothelial cells migration. Together with DMBT1, required for terminal differentiation of columnar epithelial cells during early embryogenesis. In the nucleus: acts as a pre-mRNA splicing factor. Involved in acute inflammatory responses including neutrophil activation and adhesion, chemoattraction of monocytes macrophages, opsonization of apoptotic neutrophils, and activation of mast cells. Together with TRIM16, coordinates the recognition of membrane damage with mobilization of the core autophagy regulators ATG16L1 and BECN1 in response to damaged endomembranes. When secreted, interacts with NK cell-activating receptor NCR3/NKp30 acting as an inhibitory ligand which antagonizes NK cell attack. In Cricetulus longicaudatus (Long-tailed dwarf hamster), this protein is Galectin-3 (LGALS3).